Reading from the N-terminus, the 154-residue chain is 6,7-dimethyl-8-ribityllumazine synthase (154 aa).

5-amino-6-(D-ribitylamino)uracil is bound by residues phenylalanine 22, 57–59 (VCE), and 81–83 (TVI). Residue 86-87 (KT) coordinates (2S)-2-hydroxy-3-oxobutyl phosphate. Histidine 89 serves as the catalytic Proton donor. Valine 114 provides a ligand contact to 5-amino-6-(D-ribitylamino)uracil. Residue arginine 128 coordinates (2S)-2-hydroxy-3-oxobutyl phosphate.

Belongs to the DMRL synthase family. As to quaternary structure, forms an icosahedral capsid composed of 60 subunits, arranged as a dodecamer of pentamers.

The enzyme catalyses (2S)-2-hydroxy-3-oxobutyl phosphate + 5-amino-6-(D-ribitylamino)uracil = 6,7-dimethyl-8-(1-D-ribityl)lumazine + phosphate + 2 H2O + H(+). The protein operates within cofactor biosynthesis; riboflavin biosynthesis; riboflavin from 2-hydroxy-3-oxobutyl phosphate and 5-amino-6-(D-ribitylamino)uracil: step 1/2. In terms of biological role, catalyzes the formation of 6,7-dimethyl-8-ribityllumazine by condensation of 5-amino-6-(D-ribitylamino)uracil with 3,4-dihydroxy-2-butanone 4-phosphate. This is the penultimate step in the biosynthesis of riboflavin. This Wigglesworthia glossinidia brevipalpis protein is 6,7-dimethyl-8-ribityllumazine synthase.